The chain runs to 279 residues: MPSYPVSTVNTPDGQVNVLQITDLHLSSHVPASDDETSSEVAVCQYSFEAIIKQALSKEIRCDLIVVTGDLVNKVEPAIYDHIFTVLQDTGIPFACIAGNHDVTDETGEDLPFYQRTLITRAADPRLLSRHLIESEHWQLLLLDSSITGKVEGEITATDIDWVREQLASCTKPALIALHHHVLPVDSEWIDSHMAKNAEEFWQHILPFENLRVIINGHTHQEQTRHHQGVTVYSTPSTCYQFKPFEDNFAYDKKVRPGYRWLQLANNGKVASWVERLDT.

Residues Asp23, His25, Asp70, Asn100, His179, His218, and His220 each coordinate Fe cation. Residues His25, Asp70, and 100–101 each bind AMP; that span reads NH. Position 220 (His220) interacts with AMP.

The protein belongs to the cyclic nucleotide phosphodiesterase class-III family. Fe(2+) is required as a cofactor.

The chain is Probable cyclic nucleotide phosphodiesterase Psyc_2036 from Psychrobacter arcticus (strain DSM 17307 / VKM B-2377 / 273-4).